Here is a 371-residue protein sequence, read N- to C-terminus: uncharacterized protein (371 aa).

The 4Fe-4S ferredoxin-type domain maps to 110–140 (MEKFIDFDRCNKCGECARKICKAKWTPLNYL).

This is an uncharacterized protein from Methanocaldococcus jannaschii (strain ATCC 43067 / DSM 2661 / JAL-1 / JCM 10045 / NBRC 100440) (Methanococcus jannaschii).